A 343-amino-acid polypeptide reads, in one-letter code: Aspartate-semialdehyde dehydrogenase (343 aa).

Thr11 to Val14 is an NADP(+) binding site. Residue Arg109 participates in phosphate binding. Cys148 (acyl-thioester intermediate) is an active-site residue. Position 174 (Gln174) interacts with substrate. Residue Ser177 to Gly178 participates in NADP(+) binding. A substrate-binding site is contributed by Glu200. Lys203 is a phosphate binding site. Arg233 lines the substrate pocket. His240 acts as the Proton acceptor in catalysis. Asn321 to Thr322 is a binding site for NADP(+).

It belongs to the aspartate-semialdehyde dehydrogenase family. As to quaternary structure, homodimer.

The enzyme catalyses L-aspartate 4-semialdehyde + phosphate + NADP(+) = 4-phospho-L-aspartate + NADPH + H(+). It participates in amino-acid biosynthesis; L-lysine biosynthesis via DAP pathway; (S)-tetrahydrodipicolinate from L-aspartate: step 2/4. The protein operates within amino-acid biosynthesis; L-methionine biosynthesis via de novo pathway; L-homoserine from L-aspartate: step 2/3. It functions in the pathway amino-acid biosynthesis; L-threonine biosynthesis; L-threonine from L-aspartate: step 2/5. Its function is as follows. Catalyzes the NADPH-dependent formation of L-aspartate-semialdehyde (L-ASA) by the reductive dephosphorylation of L-aspartyl-4-phosphate. The polypeptide is Aspartate-semialdehyde dehydrogenase (Archaeoglobus fulgidus (strain ATCC 49558 / DSM 4304 / JCM 9628 / NBRC 100126 / VC-16)).